The primary structure comprises 309 residues: Sulfate adenylyltransferase subunit 2 (309 aa).

The protein belongs to the PAPS reductase family. CysD subfamily. Heterodimer composed of CysD, the smaller subunit, and CysN.

It catalyses the reaction sulfate + ATP + H(+) = adenosine 5'-phosphosulfate + diphosphate. The protein operates within sulfur metabolism; hydrogen sulfide biosynthesis; sulfite from sulfate: step 1/3. Its function is as follows. With CysN forms the ATP sulfurylase (ATPS) that catalyzes the adenylation of sulfate producing adenosine 5'-phosphosulfate (APS) and diphosphate, the first enzymatic step in sulfur assimilation pathway. APS synthesis involves the formation of a high-energy phosphoric-sulfuric acid anhydride bond driven by GTP hydrolysis by CysN coupled to ATP hydrolysis by CysD. The sequence is that of Sulfate adenylyltransferase subunit 2 from Methylorubrum populi (strain ATCC BAA-705 / NCIMB 13946 / BJ001) (Methylobacterium populi).